Reading from the N-terminus, the 660-residue chain is Threonine--tRNA ligase (660 aa).

The 49-residue stretch at 1–49 (MPINEIRVQKGQRYRDAINDKKVIAVKKGDKFLDLDEIAGEDEAVQPVY) folds into the TGS domain. Positions 225–554 (DHRKIIAEMD…LLEHFAGKLP (330 aa)) are catalytic. Positions 318, 369, and 531 each coordinate Zn(2+).

Belongs to the class-II aminoacyl-tRNA synthetase family. Homodimer. It depends on Zn(2+) as a cofactor.

The protein localises to the cytoplasm. It catalyses the reaction tRNA(Thr) + L-threonine + ATP = L-threonyl-tRNA(Thr) + AMP + diphosphate + H(+). Functionally, catalyzes the attachment of threonine to tRNA(Thr) in a two-step reaction: L-threonine is first activated by ATP to form Thr-AMP and then transferred to the acceptor end of tRNA(Thr). In Thermoplasma volcanium (strain ATCC 51530 / DSM 4299 / JCM 9571 / NBRC 15438 / GSS1), this protein is Threonine--tRNA ligase.